A 243-amino-acid polypeptide reads, in one-letter code: uncharacterized protein (243 aa).

4 consecutive transmembrane segments (helical) span residues 38 to 58 (AYFL…VGIF), 99 to 119 (FGIA…FLGY), 143 to 163 (FYFS…FLVL), and 204 to 224 (AFAT…LGLF).

It is found in the cell membrane. This is an uncharacterized protein from Mycoplasma pneumoniae (strain ATCC 29342 / M129 / Subtype 1) (Mycoplasmoides pneumoniae).